The sequence spans 364 residues: N-acetyl-gamma-glutamyl-phosphate reductase (364 aa).

Residue Cys-157 is part of the active site.

It belongs to the NAGSA dehydrogenase family. Type 1 subfamily.

Its subcellular location is the cytoplasm. It catalyses the reaction N-acetyl-L-glutamate 5-semialdehyde + phosphate + NADP(+) = N-acetyl-L-glutamyl 5-phosphate + NADPH + H(+). It functions in the pathway amino-acid biosynthesis; L-arginine biosynthesis; N(2)-acetyl-L-ornithine from L-glutamate: step 3/4. Catalyzes the NADPH-dependent reduction of N-acetyl-5-glutamyl phosphate to yield N-acetyl-L-glutamate 5-semialdehyde. This Bifidobacterium animalis subsp. lactis (strain AD011) protein is N-acetyl-gamma-glutamyl-phosphate reductase.